A 238-amino-acid chain; its full sequence is Survival of motor neuron-related-splicing factor 30 (238 aa).

Positions 72 to 132 (SWKVGDKCMA…KPVEEGRKAK (61 aa)) constitute a Tudor domain. The Nuclear localization signal signature appears at 142–160 (KKEMIAQQREYKKKKALKK). Ser-201 is subject to Phosphoserine. Position 219 is an N6-acetyllysine (Lys-219).

It belongs to the SMN family. Associates with spliceosomes. Associates with U4/U5/U6 tri-snRNP and with U2 snRNP.

It is found in the nucleus speckle. The protein localises to the nucleus. It localises to the cajal body. Involved in spliceosome assembly. The polypeptide is Survival of motor neuron-related-splicing factor 30 (Smndc1) (Mus musculus (Mouse)).